The primary structure comprises 177 residues: 2''-aminoglycoside nucleotidyltransferase (177 aa).

Mg(2+) contacts are provided by Asp-44, Asp-46, and Asp-86. The Proton acceptor role is filled by Asp-86.

It depends on Mg(2+) as a cofactor.

It catalyses the reaction nucleoside triphosphate + gentamicin = diphosphate + 2''-nucleotidylgentamicin.. Mediates bacterial resistance to kanamycin, gentamicin, dibekacin, sisomicin, neomycin and tobramycin by adenylating the 2''-hydroxyl group of these antibiotics. The sequence is that of 2''-aminoglycoside nucleotidyltransferase (aadB) from Klebsiella pneumoniae.